Reading from the N-terminus, the 61-residue chain is MGCGNSTAASTTPGPAESAKDVQDDSSMDEEKRRNYGGVYVGIPADLTNETAGQTASTHKE.

Positions 1–13 (MGCGNSTAASTTP) are enriched in polar residues. A disordered region spans residues 1-61 (MGCGNSTAAS…AGQTASTHKE (61 aa)). Positions 18–34 (SAKDVQDDSSMDEEKRR) are enriched in basic and acidic residues. The span at 48 to 61 (TNETAGQTASTHKE) shows a compositional bias: polar residues.

Belongs to the OCC1 family.

The sequence is that of Overexpressed in colon carcinoma 1 protein homolog (si:dkey-261e22.4) from Danio rerio (Zebrafish).